A 360-amino-acid polypeptide reads, in one-letter code: Squamosa promoter-binding-like protein 7 (360 aa).

A compositionally biased stretch (gly residues) spans alanine 74–alanine 89. The disordered stretch occupies residues alanine 74–alanine 98. The segment at valine 105–serine 182 adopts an SBP-type zinc-finger fold. Cysteine 108, cysteine 113, cysteine 130, histidine 133, cysteine 149, cysteine 152, histidine 156, and cysteine 168 together coordinate Zn(2+). Residues lysine 165–arginine 181 carry the Bipartite nuclear localization signal motif. A compositionally biased stretch (basic residues) spans leucine 172 to serine 182. Disordered regions lie at residues leucine 172 to histidine 196, phenylalanine 261 to glutamine 306, and threonine 318 to valine 360.

In terms of tissue distribution, expressed in young panicles.

It localises to the nucleus. Functionally, trans-acting factor that binds specifically to the consensus nucleotide sequence 5'-TNCGTACAA-3'. May be involved in panicle development. The chain is Squamosa promoter-binding-like protein 7 (SPL7) from Oryza sativa subsp. japonica (Rice).